A 302-amino-acid chain; its full sequence is Vomeronasal type-1 receptor 48 (302 aa).

The Extracellular portion of the chain corresponds to M1–T16. The helical transmembrane segment at F17–I37 threads the bilayer. Over K38–D49 the chain is Cytoplasmic. A helical transmembrane segment spans residues L50 to A70. Over T71–L91 the chain is Extracellular. C85 and C172 are disulfide-bonded. A helical transmembrane segment spans residues Y92–L114. The Cytoplasmic portion of the chain corresponds to S115–N131. The chain crosses the membrane as a helical span at residues I132 to I152. Topologically, residues S153–E193 are extracellular. N159 carries N-linked (GlcNAc...) asparagine glycosylation. The helical transmembrane segment at V194–H214 threads the bilayer. At R215–Q238 the chain is on the cytoplasmic side. A helical membrane pass occupies residues T239 to C259. Topologically, residues S260–T269 are extracellular. Residues S270–I290 traverse the membrane as a helical segment. Topologically, residues S291–G302 are cytoplasmic.

This sequence belongs to the G-protein coupled receptor 1 family.

It localises to the cell membrane. In terms of biological role, putative pheromone receptor implicated in the regulation of social and reproductive behavior. In Mus musculus (Mouse), this protein is Vomeronasal type-1 receptor 48 (Vmn1r48).